Reading from the N-terminus, the 451-residue chain is Phosphoglucosamine mutase (451 aa).

S101 serves as the catalytic Phosphoserine intermediate. Positions 101, 240, 242, and 244 each coordinate Mg(2+). The residue at position 101 (S101) is a Phosphoserine.

This sequence belongs to the phosphohexose mutase family. Requires Mg(2+) as cofactor. In terms of processing, activated by phosphorylation.

The enzyme catalyses alpha-D-glucosamine 1-phosphate = D-glucosamine 6-phosphate. Its function is as follows. Catalyzes the conversion of glucosamine-6-phosphate to glucosamine-1-phosphate. The sequence is that of Phosphoglucosamine mutase from Alkalilimnicola ehrlichii (strain ATCC BAA-1101 / DSM 17681 / MLHE-1).